Reading from the N-terminus, the 758-residue chain is 5-methyltetrahydropteroyltriglutamate--homocysteine methyltransferase (758 aa).

5-methyltetrahydropteroyltri-L-glutamate contacts are provided by residues 17–20 (RELK) and K110. L-homocysteine contacts are provided by residues 428–430 (IGS) and E481. L-methionine-binding positions include 428–430 (IGS) and E481. Residues 512–513 (RC) and W558 contribute to the 5-methyltetrahydropteroyltri-L-glutamate site. D596 is a binding site for L-homocysteine. Position 596 (D596) interacts with L-methionine. E602 is a 5-methyltetrahydropteroyltri-L-glutamate binding site. Zn(2+) contacts are provided by H638, C640, and E662. H691 serves as the catalytic Proton donor. C723 is a binding site for Zn(2+).

The protein belongs to the vitamin-B12 independent methionine synthase family. Requires Zn(2+) as cofactor.

It carries out the reaction 5-methyltetrahydropteroyltri-L-glutamate + L-homocysteine = tetrahydropteroyltri-L-glutamate + L-methionine. The protein operates within amino-acid biosynthesis; L-methionine biosynthesis via de novo pathway; L-methionine from L-homocysteine (MetE route): step 1/1. Functionally, catalyzes the transfer of a methyl group from 5-methyltetrahydrofolate to homocysteine resulting in methionine formation. This Thermosynechococcus vestitus (strain NIES-2133 / IAM M-273 / BP-1) protein is 5-methyltetrahydropteroyltriglutamate--homocysteine methyltransferase.